The following is a 414-amino-acid chain: NADH-dependent flavin oxidoreductase iccE (414 aa).

FMN contacts are provided by residues 25–28 (TAIA) and Gln-107. Residue 188–191 (HASH) participates in substrate binding. 347–348 (AR) serves as a coordination point for FMN.

This sequence belongs to the NADH:flavin oxidoreductase/NADH oxidase family.

It carries out the reaction 8-epi-ilicicolin H = ilicicolin H. It functions in the pathway mycotoxin biosynthesis. NADH-dependent flavin oxidoreductase; part of the gene cluster that mediates the biosynthesis of ilicicolin H, a 4-hydroxy-2-pyridonealkaloid that has potent and broad antifungal activities by inhibiting the mitochondrial respiration chain. IccE acts as an epimerase and catalyzes the conversion of 8-epi-ilicicolin H into the final product ilicicolin H. The biosynthesis of ilicicolin H starts with formation of the tetramic acid by the hybrid PKS-NRPS synthetase iccA with the partnering trans-enoyl reductase iccB since iccA lacks a designated enoylreductase (ER) domain. The cytochrome P450 monooxygenase iccC then catalyzes the ring expansion of the tetramate to the acyclic 2-pyridone. The pericyclase iccD further converts the acyclic 2-pyridone into 8-epi-ilicicolin H. Finally, the epimerase iccE converts 8-epi-ilicicolin H into ilicicolin H via epimerization. IccA to iccE are sufficient for ilicicolin H biosynthesis and the roles of the remaining enzymes, iccF, iccG and iccH within the pathway have still to be determined. The sequence is that of NADH-dependent flavin oxidoreductase iccE from Talaromyces variabilis (Penicillium variabile).